The primary structure comprises 156 residues: 17.7 kDa class II heat shock protein (156 aa).

Residues 39 to 156 (DAKAMAATPA…KPKTIQVQVA (118 aa)) enclose the sHSP domain.

Belongs to the small heat shock protein (HSP20) family. In terms of assembly, may form oligomeric structures.

Its subcellular location is the cytoplasm. The protein is 17.7 kDa class II heat shock protein (HSP17.7) of Arabidopsis thaliana (Mouse-ear cress).